The following is a 362-amino-acid chain: UDP-N-acetylglucosamine--N-acetylmuramyl-(pentapeptide) pyrophosphoryl-undecaprenol N-acetylglucosamine transferase (362 aa).

Residues 15–17, Asn127, Arg165, Ser191, Ile247, 266–271, and Gln292 contribute to the UDP-N-acetyl-alpha-D-glucosamine site; these read TGG and ALTVSE.

It belongs to the glycosyltransferase 28 family. MurG subfamily.

It is found in the cell inner membrane. The catalysed reaction is di-trans,octa-cis-undecaprenyl diphospho-N-acetyl-alpha-D-muramoyl-L-alanyl-D-glutamyl-meso-2,6-diaminopimeloyl-D-alanyl-D-alanine + UDP-N-acetyl-alpha-D-glucosamine = di-trans,octa-cis-undecaprenyl diphospho-[N-acetyl-alpha-D-glucosaminyl-(1-&gt;4)]-N-acetyl-alpha-D-muramoyl-L-alanyl-D-glutamyl-meso-2,6-diaminopimeloyl-D-alanyl-D-alanine + UDP + H(+). It functions in the pathway cell wall biogenesis; peptidoglycan biosynthesis. Its function is as follows. Cell wall formation. Catalyzes the transfer of a GlcNAc subunit on undecaprenyl-pyrophosphoryl-MurNAc-pentapeptide (lipid intermediate I) to form undecaprenyl-pyrophosphoryl-MurNAc-(pentapeptide)GlcNAc (lipid intermediate II). The chain is UDP-N-acetylglucosamine--N-acetylmuramyl-(pentapeptide) pyrophosphoryl-undecaprenol N-acetylglucosamine transferase from Shewanella sp. (strain ANA-3).